The following is a 115-amino-acid chain: MKKKHRIKKNDEFQAVFQKGKSNANRQFVVYQLDKEEQPNFRIGLSVSKKIGNAVVRNRIKRMVRQAITELKDEIDSGKDFVIIARKPCAEMTYEEVKKSLIHVFKRSGMKRIKK.

This sequence belongs to the RnpA family. Consists of a catalytic RNA component (M1 or rnpB) and a protein subunit.

The catalysed reaction is Endonucleolytic cleavage of RNA, removing 5'-extranucleotides from tRNA precursor.. Its function is as follows. RNaseP catalyzes the removal of the 5'-leader sequence from pre-tRNA to produce the mature 5'-terminus. It can also cleave other RNA substrates such as 4.5S RNA. The protein component plays an auxiliary but essential role in vivo by binding to the 5'-leader sequence and broadening the substrate specificity of the ribozyme. This Bacillus cereus (strain G9842) protein is Ribonuclease P protein component.